A 607-amino-acid chain; its full sequence is UvrABC system protein C (607 aa).

Residues 16–94 (GRPGVYRMFD…IKEWRPPYNI (79 aa)) form the GIY-YIG domain. The region spanning 203 to 238 (NALSDELNASMEKAAMALDFERAAELRDQVALLRRV) is the UVR domain.

The protein belongs to the UvrC family. Interacts with UvrB in an incision complex.

Its subcellular location is the cytoplasm. The UvrABC repair system catalyzes the recognition and processing of DNA lesions. UvrC both incises the 5' and 3' sides of the lesion. The N-terminal half is responsible for the 3' incision and the C-terminal half is responsible for the 5' incision. The polypeptide is UvrABC system protein C (Pseudomonas syringae pv. tomato (strain ATCC BAA-871 / DC3000)).